A 735-amino-acid chain; its full sequence is Alpha-adducin (735 aa).

N-acetylmethionine is present on M1. Positions 1–11 (MNGDTRAAVVT) are enriched in low complexity. A disordered region spans residues 1-21 (MNGDTRAAVVTSPPPTTAPHK). S12 is modified (phosphoserine). S59 is modified (phosphoserine; by PKA). A Phosphoserine modification is found at S64. T331 bears the Phosphothreonine mark. Phosphoserine is present on residues S334, S353, and S355. A Phosphothreonine modification is found at T358. A phosphoserine mark is found at S364 and S366. The residue at position 408 (S408) is a Phosphoserine; by PKA. Disordered regions lie at residues 418-486 (GHSF…SAVP) and 576-735 (RREV…KSDS). Position 427 is a phosphoserine (S427). At T429 the chain carries Phosphothreonine. S431 carries the phosphoserine modification. A Phosphoserine; by PKA modification is found at S436. Phosphothreonine; by ROCK2 is present on T445. Residues S464 and S465 each carry the phosphoserine modification. T480 bears the Phosphothreonine; by ROCK2 mark. Residue S481 is modified to Phosphoserine; by PKA. A compositionally biased stretch (basic and acidic residues) spans 576-601 (RREVERKQKGSEENLDETREQKEKSP). 3 positions are modified to phosphoserine: S586, S600, and S605. T610 bears the Phosphothreonine mark. Phosphoserine is present on S613. A Phosphothreonine modification is found at T614. Over residues 678–712 (EPASASAPGAEEVASPATEEGSPMDPGSDGSPGKS) the composition is skewed to low complexity. Phosphoserine is present on residues S705, S708, and S712. Residues 713–735 (PSKKKKKFRTPSFLKKSKKKSDS) show a composition bias toward basic residues. S714 carries the phosphoserine; by PKC modification. An interaction with calmodulin region spans residues 715 to 732 (KKKKKFRTPSFLKKSKKK). Phosphoserine; by PKA and PKC is present on S724.

This sequence belongs to the aldolase class II family. Adducin subfamily. In terms of assembly, heterodimer of an alpha and a beta subunit or an alpha and a gamma subunit.

Its subcellular location is the cytoplasm. The protein localises to the cytoskeleton. It is found in the cell membrane. Membrane-cytoskeleton-associated protein that promotes the assembly of the spectrin-actin network. Binds to calmodulin. The chain is Alpha-adducin (Add1) from Rattus norvegicus (Rat).